Consider the following 231-residue polypeptide: Chromosome partition protein MukE (231 aa).

Residues 211 to 231 (SLLADEEEQDYNEQAELEGEA) form a disordered region. Over residues 214 to 231 (ADEEEQDYNEQAELEGEA) the composition is skewed to acidic residues.

This sequence belongs to the MukE family. As to quaternary structure, interacts, and probably forms a ternary complex, with MukF and MukB. The complex formation is stimulated by calcium or magnesium.

The protein localises to the cytoplasm. It localises to the nucleoid. In terms of biological role, involved in chromosome condensation, segregation and cell cycle progression. May participate in facilitating chromosome segregation by condensation DNA from both sides of a centrally located replisome during cell division. Probably acts via its interaction with MukB and MukF. This chain is Chromosome partition protein MukE, found in Vibrio vulnificus (strain CMCP6).